Reading from the N-terminus, the 199-residue chain is uncharacterized protein (199 aa).

A Nudix hydrolase domain is found at 38 to 169 (NRRAAVLIPI…SLDIHREGIN (132 aa)). The short motif at 76 to 98 (GKADPDDQSLISTALREAEEEVA) is the Nudix box element. Mg(2+)-binding residues include glutamate 92 and glutamate 96.

The protein belongs to the Nudix hydrolase family. PCD1 subfamily. The cofactor is Mn(2+). Mg(2+) is required as a cofactor.

Functionally, probably mediates the hydrolysis of some nucleoside diphosphate derivatives. This is an uncharacterized protein from Yersinia pseudotuberculosis serotype I (strain IP32953).